Consider the following 250-residue polypeptide: Peptidyl-tRNA hydrolase, mitochondrial (250 aa).

Residues 1–45 constitute a mitochondrion transit peptide; that stretch reads MRLLSGASASRIPCPLLSLARARARCLPVPASATACRAASSSAAA. Residue Y68 coordinates tRNA. H73 serves as the catalytic Proton acceptor. TRNA-binding residues include F118, N120, and N166.

Belongs to the PTH family.

It is found in the mitochondrion. It carries out the reaction an N-acyl-L-alpha-aminoacyl-tRNA + H2O = an N-acyl-L-amino acid + a tRNA + H(+). Its function is as follows. The natural substrate for this enzyme may be peptidyl-tRNAs which drop off the ribosome during protein synthesis. In Oryza sativa subsp. japonica (Rice), this protein is Peptidyl-tRNA hydrolase, mitochondrial.